Reading from the N-terminus, the 343-residue chain is Methylthioribose-1-phosphate isomerase (343 aa).

Substrate-binding positions include 48 to 50 (RGA), Arg-88, and Gln-193. Asp-234 functions as the Proton donor in the catalytic mechanism. Residue 244-245 (NK) participates in substrate binding.

The protein belongs to the eIF-2B alpha/beta/delta subunits family. MtnA subfamily.

The catalysed reaction is 5-(methylsulfanyl)-alpha-D-ribose 1-phosphate = 5-(methylsulfanyl)-D-ribulose 1-phosphate. It participates in amino-acid biosynthesis; L-methionine biosynthesis via salvage pathway; L-methionine from S-methyl-5-thio-alpha-D-ribose 1-phosphate: step 1/6. Catalyzes the interconversion of methylthioribose-1-phosphate (MTR-1-P) into methylthioribulose-1-phosphate (MTRu-1-P). In Thermotoga maritima (strain ATCC 43589 / DSM 3109 / JCM 10099 / NBRC 100826 / MSB8), this protein is Methylthioribose-1-phosphate isomerase.